Reading from the N-terminus, the 130-residue chain is Small ribosomal subunit protein uS9 (130 aa).

Residues 104–130 (LTRDPRMKERRKYGLKKARKAPQFSKR) are disordered. Residues 111 to 130 (KERRKYGLKKARKAPQFSKR) are compositionally biased toward basic residues.

This sequence belongs to the universal ribosomal protein uS9 family.

In Moorella thermoacetica (strain ATCC 39073 / JCM 9320), this protein is Small ribosomal subunit protein uS9.